Consider the following 283-residue polypeptide: 4-diphosphocytidyl-2-C-methyl-D-erythritol kinase (283 aa).

Lys-10 is a catalytic residue. Residue 95–105 coordinates ATP; that stretch reads PVAAGLGGGSS. Residue Asp-137 is part of the active site.

The protein belongs to the GHMP kinase family. IspE subfamily.

It carries out the reaction 4-CDP-2-C-methyl-D-erythritol + ATP = 4-CDP-2-C-methyl-D-erythritol 2-phosphate + ADP + H(+). It functions in the pathway isoprenoid biosynthesis; isopentenyl diphosphate biosynthesis via DXP pathway; isopentenyl diphosphate from 1-deoxy-D-xylulose 5-phosphate: step 3/6. Functionally, catalyzes the phosphorylation of the position 2 hydroxy group of 4-diphosphocytidyl-2C-methyl-D-erythritol. This Limosilactobacillus reuteri (strain DSM 20016) (Lactobacillus reuteri) protein is 4-diphosphocytidyl-2-C-methyl-D-erythritol kinase.